We begin with the raw amino-acid sequence, 255 residues long: Folate receptor beta (255 aa).

An N-terminal signal peptide occupies residues 1–16; that stretch reads MVWKWMPLLLLLVCVA. 8 cysteine pairs are disulfide-bonded: Cys-31–Cys-59, Cys-51–Cys-99, Cys-60–Cys-103, Cys-83–Cys-169, Cys-90–Cys-140, Cys-129–Cys-203, Cys-133–Cys-183, and Cys-146–Cys-163. Residues Asp-97 and Tyr-101 each contribute to the folate site. An N-linked (GlcNAc...) asparagine glycan is attached at Asn-115. Folate contacts are provided by residues 118-122, 151-156, and Ser-190; these read WRKER and HRGWDW. N-linked (GlcNAc...) asparagine glycosylation is present at Asn-195. Asn-230 carries the GPI-anchor amidated asparagine lipid modification. The propeptide at 231–255 is removed in mature form; it reads AGEMLHGTGGLLLSLALMLQLWLLG.

This sequence belongs to the folate receptor family. Post-translationally, N-glycosylated. In terms of tissue distribution, expressed in placenta and hematopoietic cells. Expression is increased in malignant tissues.

It localises to the cell membrane. The protein localises to the secreted. Binds to folate and reduced folic acid derivatives and mediates delivery of 5-methyltetrahydrofolate and folate analogs into the interior of cells. Has high affinity for folate and folic acid analogs at neutral pH. Exposure to slightly acidic pH after receptor endocytosis triggers a conformation change that strongly reduces its affinity for folates and mediates their release. The protein is Folate receptor beta (FOLR2) of Homo sapiens (Human).